The primary structure comprises 248 residues: MNHIVLGLIQGLTEFLPISSSGHLTLFSYLFNIEPNISNFAFLHLATLAAIIVFVWKEIVEILKGLFTLKKEYYSLVLKIIISTIPAAIFGFLFNSTIENSFSNLKIISFFFLVTAASLFVSDKLKGKKDFFNISYIDALIIGLFQMIAIFPGISRSGITLFGALTVGLEREKALKYSFLMGIPVILGAGILETSKIELNSYILISGLVAFLSGLLSLLILKKLTISKKLKIFSYYCILIAIIAFFVG.

A run of 8 helical transmembrane segments spans residues 4-24, 40-60, 74-94, 101-121, 134-154, 174-194, 201-221, and 228-248; these read IVLGLIQGLTEFLPISSSGHL, FAFLHLATLAAIIVFVWKEIV, YSLVLKIIISTIPAAIFGFLF, SFSNLKIISFFFLVTAASLFV, ISYIDALIIGLFQMIAIFPGI, ALKYSFLMGIPVILGAGILET, SYILISGLVAFLSGLLSLLIL, and KKLKIFSYYCILIAIIAFFVG.

This sequence belongs to the UppP family.

The protein resides in the cell inner membrane. The enzyme catalyses di-trans,octa-cis-undecaprenyl diphosphate + H2O = di-trans,octa-cis-undecaprenyl phosphate + phosphate + H(+). Functionally, catalyzes the dephosphorylation of undecaprenyl diphosphate (UPP). Confers resistance to bacitracin. The protein is Undecaprenyl-diphosphatase of Thermosipho africanus (strain TCF52B).